A 179-amino-acid chain; its full sequence is MSRIGKNPVPIPEKVSVEISGLTVKVKGPKGELERVLPDGVSVSQADNAVTVSPSDTSRRSRERHGLCRTLVANMVEGVSKGFSKKLEIIGVGYRAQVKGKKLVVSAGYSHPVEMDAPEGVTFAVENNTLVTVSGADKELVGNEAAKVRGIRPPEPYKGKGIKYQGERILRKAGKTGKK.

This sequence belongs to the universal ribosomal protein uL6 family. Part of the 50S ribosomal subunit.

This protein binds to the 23S rRNA, and is important in its secondary structure. It is located near the subunit interface in the base of the L7/L12 stalk, and near the tRNA binding site of the peptidyltransferase center. In Synechococcus sp. (strain RCC307), this protein is Large ribosomal subunit protein uL6.